The primary structure comprises 1711 residues: Receptor-type tyrosine-protein phosphatase V (1711 aa).

An N-terminal signal peptide occupies residues 1–17 (MRPLILLAALLWLQGFL). The Extracellular portion of the chain corresponds to 18–1074 (AEDDACSSLE…SEPRASISLA (1057 aa)). Fibronectin type-III domains are found at residues 37–129 (PLLS…TAPT), 130–222 (VVRG…VPPD), 218–305 (PVPP…EWTY), 306–391 (PSYP…LAES), 393–470 (ALPR…ISGY), 475–569 (PPQS…APPT), 565–654 (PAPP…TGWT), 655–749 (PPSA…IPNE), 744–831 (PLIP…VLSV), and 832–926 (EPGP…SAEA). Residues N42, N74, N89, N117, N174, N239, and N259 are each glycosylated (N-linked (GlcNAc...) asparagine). N431 is a glycosylation site (N-linked (GlcNAc...) asparagine). Residues N570, N620, N649, N663, and N737 are each glycosylated (N-linked (GlcNAc...) asparagine). N851, N882, N970, and N982 each carry an N-linked (GlcNAc...) asparagine glycan. Residues 1075–1095 (IIPLTVMLGAVVGSIVIVCAV) traverse the membrane as a helical segment. Over 1096–1711 (LCLLRWRCLK…PRAGKWPAPC (616 aa)) the chain is Cytoplasmic. Tyrosine-protein phosphatase domains lie at 1150-1409 (FFQE…LLNK) and 1427-1696 (DFAQ…LNSA). Residues D1316, 1350 to 1356 (CSAGVGR), and Q1394 contribute to the substrate site. C1350 serves as the catalytic Phosphocysteine intermediate.

This sequence belongs to the protein-tyrosine phosphatase family. Receptor class 3 subfamily. The cytoplasmic domain contains potential phosphorylation sites. In terms of tissue distribution, bone and testis. In the latter, restricted to the basal portion of the seminiferous tubule.

It is found in the membrane. It catalyses the reaction O-phospho-L-tyrosyl-[protein] + H2O = L-tyrosyl-[protein] + phosphate. In terms of biological role, protein tyrosine phosphatase that acts as a regulator of energy metabolism. Prevents decarboxylation of osteocalcin (Bglap) via an indirect mechanism, preventing the hormone activity of osteocalcin. Functions in signaling pathways during bone remodeling, as well as serve a broader role in cell interactions associated with differentiation in bone and testis. Associated with differentiation in bone and testis. The protein is Receptor-type tyrosine-protein phosphatase V (Ptprv) of Rattus norvegicus (Rat).